A 406-amino-acid chain; its full sequence is Pyruvate dehydrogenase E1 component subunit beta-3, chloroplastic (406 aa).

The N-terminal 70 residues, 1-70 (MSAILQGAGA…PLIPNAVTTK (70 aa)), are a transit peptide targeting the chloroplast. Residue Glu142 participates in thiamine diphosphate binding. K(+) is bound by residues Val195, Ala243, Ile244, and Asn248.

In terms of assembly, tetramer of 2 alpha and 2 beta subunits. It depends on thiamine diphosphate as a cofactor.

It localises to the plastid. The protein resides in the chloroplast. The catalysed reaction is N(6)-[(R)-lipoyl]-L-lysyl-[protein] + pyruvate + H(+) = N(6)-[(R)-S(8)-acetyldihydrolipoyl]-L-lysyl-[protein] + CO2. Functionally, the pyruvate dehydrogenase complex catalyzes the overall conversion of pyruvate to acetyl-CoA and CO(2). It contains multiple copies of three enzymatic components: pyruvate dehydrogenase (E1), dihydrolipoamide acetyltransferase (E2) and lipoamide dehydrogenase (E3). In Arabidopsis thaliana (Mouse-ear cress), this protein is Pyruvate dehydrogenase E1 component subunit beta-3, chloroplastic (E1-BETA-2).